Consider the following 326-residue polypeptide: Metal-binding protein YtgA (326 aa).

The signal sequence occupies residues 1-21; that stretch reads MSFFHTRKYKLILRGLLCLAG. His-75, His-141, His-207, and Asp-299 together coordinate Fe(2+).

This sequence belongs to the bacterial solute-binding protein 9 family. Monomer.

It is found in the periplasm. Functionally, part of the ATP-binding cassette (ABC) transport system YtgABCD involved in metal import. Binds Fe(2+), Mn(2+) and Ni(2+), with a preference for Fe(2+) and delivers them to the membrane permease for translocation into the cytoplasm. The sequence is that of Metal-binding protein YtgA from Chlamydia trachomatis serovar D (strain ATCC VR-885 / DSM 19411 / UW-3/Cx).